Consider the following 874-residue polypeptide: Probable inorganic carbon transporter subunit DabA (874 aa).

Positions 398, 400, 580, and 595 each coordinate Zn(2+).

It belongs to the inorganic carbon transporter (TC 9.A.2) DabA family. As to quaternary structure, forms a complex with DabB. Zn(2+) serves as cofactor.

The protein resides in the cell membrane. Part of an energy-coupled inorganic carbon pump. The polypeptide is Probable inorganic carbon transporter subunit DabA (Bacillus cereus (strain AH820)).